Here is a 102-residue protein sequence, read N- to C-terminus: RNA-binding protein Hfq (102 aa).

The 60-residue stretch at 9–68 (DPFLNALRRERVPVSIYLVNGIKLQGQIESFDQFVILLKNTVSQMVYKHAISTVVPSRPV) folds into the Sm domain. The disordered stretch occupies residues 63-102 (VPSRPVSHHSNNAGGGSNNYHHSNNAQPSSAASQDSEDAE). The span at 70–96 (HHSNNAGGGSNNYHHSNNAQPSSAASQ) shows a compositional bias: low complexity.

Belongs to the Hfq family. As to quaternary structure, homohexamer.

Its function is as follows. RNA chaperone that binds small regulatory RNA (sRNAs) and mRNAs to facilitate mRNA translational regulation in response to envelope stress, environmental stress and changes in metabolite concentrations. Also binds with high specificity to tRNAs. The sequence is that of RNA-binding protein Hfq from Cronobacter sakazakii (strain ATCC BAA-894) (Enterobacter sakazakii).